Consider the following 193-residue polypeptide: Acyl carrier protein phosphodiesterase (193 aa).

The protein belongs to the AcpH family.

It carries out the reaction holo-[ACP] + H2O = apo-[ACP] + (R)-4'-phosphopantetheine + H(+). Functionally, converts holo-ACP to apo-ACP by hydrolytic cleavage of the phosphopantetheine prosthetic group from ACP. In Enterobacter sp. (strain 638), this protein is Acyl carrier protein phosphodiesterase.